A 205-amino-acid chain; its full sequence is Ribosomal RNA small subunit methyltransferase G (205 aa).

S-adenosyl-L-methionine is bound by residues Gly-66, Phe-71, 119-120 (IE), and Arg-135.

The protein belongs to the methyltransferase superfamily. RNA methyltransferase RsmG family.

It localises to the cytoplasm. It carries out the reaction guanosine(527) in 16S rRNA + S-adenosyl-L-methionine = N(7)-methylguanosine(527) in 16S rRNA + S-adenosyl-L-homocysteine. In terms of biological role, specifically methylates the N7 position of guanine in position 527 of 16S rRNA. This chain is Ribosomal RNA small subunit methyltransferase G, found in Rhizobium leguminosarum bv. trifolii (strain WSM2304).